The following is a 377-amino-acid chain: Glutamate 5-kinase (377 aa).

Position 22 (Lys22) interacts with ATP. The substrate site is built by Ser62, Asp149, and Asn161. ATP contacts are provided by residues 181–182 (TD) and 223–229 (TGGMVTK). One can recognise a PUA domain in the interval 285-363 (RGTIVVDAGA…AQLKRFLGPQ (79 aa)).

Belongs to the glutamate 5-kinase family.

Its subcellular location is the cytoplasm. The catalysed reaction is L-glutamate + ATP = L-glutamyl 5-phosphate + ADP. The protein operates within amino-acid biosynthesis; L-proline biosynthesis; L-glutamate 5-semialdehyde from L-glutamate: step 1/2. In terms of biological role, catalyzes the transfer of a phosphate group to glutamate to form L-glutamate 5-phosphate. The polypeptide is Glutamate 5-kinase (Bifidobacterium longum (strain DJO10A)).